The sequence spans 119 residues: Large ribosomal subunit protein bL20 (119 aa).

Belongs to the bacterial ribosomal protein bL20 family.

Functionally, binds directly to 23S ribosomal RNA and is necessary for the in vitro assembly process of the 50S ribosomal subunit. It is not involved in the protein synthesizing functions of that subunit. In Streptococcus pyogenes serotype M1, this protein is Large ribosomal subunit protein bL20.